Consider the following 484-residue polypeptide: Coronin-1B (484 aa).

Serine 2 is modified (phosphoserine). WD repeat units follow at residues 80 to 120 (GHTG…LTSP), 130 to 170 (GHTK…ELYR), 174 to 213 (LHPD…LVAE), 217 to 260 (AHEG…EPMA), and 265 to 305 (DSSN…PYIH). The segment at 404–446 (LKVSRRNVLSDSRPASYSRSGASTATAVTDVPSGNLAGAGEAG) is disordered. Residues 410–430 (NVLSDSRPASYSRSGASTATA) are compositionally biased toward polar residues. Residues 444 to 482 (EAGKLEEVMQELRALRMLVKEQGERISRLEEQLGRMENG) are a coiled coil.

It belongs to the WD repeat coronin family. As to quaternary structure, forms homooligomers, but does not form complexes with the other coronins. Interacts with Arp2/3 complex components, including ACTR2, ARPC1B and ARPC2. Binds actin. Post-translationally, phosphorylation on Ser-2 regulates the interaction with the Arp2/3 complex and cell motility in fibroblasts. Phosphorylation does not seem to affect subcellular location. Ubiquitous.

It localises to the cytoplasm. The protein localises to the cytoskeleton. The protein resides in the stress fiber. Its function is as follows. Regulates leading edge dynamics and cell motility in fibroblasts. May be involved in cytokinesis and signal transduction. The protein is Coronin-1B (Coro1b) of Mus musculus (Mouse).